Consider the following 340-residue polypeptide: Probable peroxidase 61 (340 aa).

The N-terminal stretch at 1 to 25 (MQFVNFFPLLALVVISLAGKATVEA) is a signal peptide. 4 cysteine pairs are disulfide-bonded: Cys-46/Cys-122, Cys-79/Cys-84, Cys-128/Cys-331, and Cys-205/Cys-237. N-linked (GlcNAc...) asparagine glycosylation is present at Asn-63. Arg-73 is a catalytic residue. Positions 78, 81, 83, 85, and 87 each coordinate Ca(2+). Pro-168 is a binding site for substrate. His-198 contributes to the heme b binding site. Position 199 (Ser-199) interacts with Ca(2+). N-linked (GlcNAc...) asparagine glycosylation is present at Asn-226. Positions 255 and 258 each coordinate Ca(2+).

It belongs to the peroxidase family. Classical plant (class III) peroxidase subfamily. Heme b is required as a cofactor. It depends on Ca(2+) as a cofactor.

Its subcellular location is the secreted. The catalysed reaction is 2 a phenolic donor + H2O2 = 2 a phenolic radical donor + 2 H2O. Functionally, removal of H(2)O(2), oxidation of toxic reductants, biosynthesis and degradation of lignin, suberization, auxin catabolism, response to environmental stresses such as wounding, pathogen attack and oxidative stress. The enzyme activity has to be proved. This Arabidopsis thaliana (Mouse-ear cress) protein is Probable peroxidase 61 (PER61).